A 242-amino-acid polypeptide reads, in one-letter code: Protein HTATIP2 (242 aa).

Alanine 2 carries the post-translational modification N-acetylalanine. The segment at 2 to 25 (AETEALSKLREDFRMQNKSVFILG) is required for interaction with elongation factor EEF1A1. The NADPH site is built by serine 27, glycine 28, glutamate 29, threonine 30, arginine 52, arginine 53, leucine 92, glycine 93, tyrosine 143, lysine 147, leucine 170, and arginine 178. The Proton acceptor role is filled by tyrosine 143. Lysine 147 is a catalytic residue.

Monomer. Forms homodimers during oxidative stress. Interacts (via N-terminus) with elongation factor EEF1A1 (via middle-region); the interaction is direct and competes with EEF1A1 binding to guanyl-nucleotide exchange factor EEF1B2, thereby inhibiting GDP for GTP exchange and reactivation of EEF1A1. Interacts with nuclear transport receptors XPO4, IPO5/RANBP5, IPO7, IPO9 and KPNB1 as well as GCN1L1/GCN1 and LRPPRC probably through their HEAT repeats. Binds NCOA5/CIA. As to quaternary structure, interacts (via N-terminus) with proteasome subunit PSMD4/s5a. In terms of assembly, (Microbial infection) Interacts with HIV-1 Tat (via activation domain). As to expression, high levels in liver, lung, skeletal muscle, pancreas and placenta. Moderate levels in heart and kidney. Low levels in brain. Not expressed or low levels in variant small cell lung carcinomas, 33% of hepatocellular carcinomas and neuroblastomas. Levels are reduced in the heart of patients with hypertrophic cardiomyopathy and failing hearts.

The protein localises to the cytoplasm. Represses translation by preventing reactivation of elongation factor eEF1A. May also inhibit nuclear import by competing with nuclear import substrates for binding to a subset of nuclear transport receptors. Has additionally been proposed to act as a redox sensor involved in cellular oxidative stress surveillance. The sequence is that of Protein HTATIP2 from Homo sapiens (Human).